A 364-amino-acid chain; its full sequence is Aminomethyltransferase (364 aa).

The protein belongs to the GcvT family. As to quaternary structure, the glycine cleavage system is composed of four proteins: P, T, L and H.

The enzyme catalyses N(6)-[(R)-S(8)-aminomethyldihydrolipoyl]-L-lysyl-[protein] + (6S)-5,6,7,8-tetrahydrofolate = N(6)-[(R)-dihydrolipoyl]-L-lysyl-[protein] + (6R)-5,10-methylene-5,6,7,8-tetrahydrofolate + NH4(+). In terms of biological role, the glycine cleavage system catalyzes the degradation of glycine. This is Aminomethyltransferase from Proteus mirabilis (strain HI4320).